The primary structure comprises 428 residues: GTPase Obg (428 aa).

The region spanning 1 to 158 (MFVDQVQVEV…RFIKLELKVL (158 aa)) is the Obg domain. The 175-residue stretch at 159-333 (ADVGLVGFPS…LMHKTAEVLK (175 aa)) folds into the OBG-type G domain. Residues 165–172 (GFPSVGKS), 190–194 (FTTLV), 212–215 (DLPG), 282–285 (TKMD), and 314–316 (SSL) each bind GTP. Mg(2+) is bound by residues S172 and T192. In terms of domain architecture, OCT spans 350–428 (YKYQPEPALK…IDDFTFEFVE (79 aa)).

The protein belongs to the TRAFAC class OBG-HflX-like GTPase superfamily. OBG GTPase family. In terms of assembly, monomer. Mg(2+) serves as cofactor.

The protein resides in the cytoplasm. An essential GTPase which binds GTP, GDP and possibly (p)ppGpp with moderate affinity, with high nucleotide exchange rates and a fairly low GTP hydrolysis rate. Plays a role in control of the cell cycle, stress response, ribosome biogenesis and in those bacteria that undergo differentiation, in morphogenesis control. The polypeptide is GTPase Obg (Lacticaseibacillus casei (strain BL23) (Lactobacillus casei)).